We begin with the raw amino-acid sequence, 872 residues long: DNA mismatch repair protein MutS (872 aa).

Residue 626–633 (GPNMAGKS) coordinates ATP.

It belongs to the DNA mismatch repair MutS family.

Functionally, this protein is involved in the repair of mismatches in DNA. It is possible that it carries out the mismatch recognition step. This protein has a weak ATPase activity. In Chlorobium phaeobacteroides (strain DSM 266 / SMG 266 / 2430), this protein is DNA mismatch repair protein MutS.